A 194-amino-acid polypeptide reads, in one-letter code: Protein GrpE (194 aa).

Belongs to the GrpE family. As to quaternary structure, homodimer.

Its subcellular location is the cytoplasm. Functionally, participates actively in the response to hyperosmotic and heat shock by preventing the aggregation of stress-denatured proteins, in association with DnaK and GrpE. It is the nucleotide exchange factor for DnaK and may function as a thermosensor. Unfolded proteins bind initially to DnaJ; upon interaction with the DnaJ-bound protein, DnaK hydrolyzes its bound ATP, resulting in the formation of a stable complex. GrpE releases ADP from DnaK; ATP binding to DnaK triggers the release of the substrate protein, thus completing the reaction cycle. Several rounds of ATP-dependent interactions between DnaJ, DnaK and GrpE are required for fully efficient folding. This Aliivibrio salmonicida (strain LFI1238) (Vibrio salmonicida (strain LFI1238)) protein is Protein GrpE.